The following is a 536-amino-acid chain: Cytochrome P450 monooxygenase phqM (536 aa).

C464 is a heme binding site.

Belongs to the cytochrome P450 family. Heme serves as cofactor.

It functions in the pathway alkaloid biosynthesis. In terms of biological role, cytochrome P450 monooxygenase; part of the gene cluster that mediates the biosynthesis of paraherquamide, a fungal indole alkaloid that belongs to a family of natural products containing a characteristic bicyclo[2.2.2]diazaoctane core. The first steps in the biosynthesis of paraherquamide is the production of the beta-methyl-proline precursor from L-isoleucine. They require oxidation of a terminally hydroxylated L-isoleucine to the corresponding aldehyde by enzymes which have still to be identified. Spontaneous cyclization and dehydration would yield the 4-methyl pyrolline-5-carboxylic acid, which is then reduced by the pyrroline-5-carboxylate reductase phqD leading to the beta-methyl-proline precursor. The next step of paraherquamide biosynthesis involves coupling of beta-methyl-proline and L-tryptophan by the bimodular NRPS phqB, to produce a monooxopiperazine intermediate. The reductase (R) domain of phqB utilizes NADPH for hydride transfer to reduce the thioester bond of the T domain-tethered linear dipeptide to a hemithioaminal intermediate, which spontaneously cleaves the C-S bond to release the aldehyde product. This compound undergoes spontaneous cyclization and dehydration to give a dienamine which is reverse prenylated at C-2 by the reverse prenyltransferase phqJ. The other prenyltransferase present in the cluster, phqI may be a redundant gene in the pathway. During biosynthetic assembly, the key step to produce the polycyclic core is catalyzed by the bifunctional reductase and intramolecular [4+2] Diels-Alderase, phqE, resulting in formation of the [2.2.2] diazaoctane intermediate preparaherquamide. Following formation of preparaherquamide, an indole 2,3-epoxidation-initiated pinacol-like rearrangement is catalyzed by the phqK FAD-dependent monooxygenase. The prenyltransferase phqA, the cytochrome P450 monooxygenase phqL, and the FAD-linked oxidoreductase phqH (or the cytochrome P450 monooxygenase phqM), are proposed to be involved in the formation of the pyran ring. The FAD-dependent monooxygenase phqK is likely responsible for generation of the spiro-oxindole, and the N-methylation is likely mediated by the phqN methyltransferase leading to the isolable natural product paraherquamide F. However, the order of these biosynthetic steps has still to be determined. In late-stage paraherquamide biosynthesis, the third P450 monooxygenase, phqO, is probably responsible for the C-14 hydroxylation, transforming paraherquamide F to paraherquamide G, and paraherquamide E to the final product paraherquamide A. The expansion from the 6-membered ring pyran (in paraherquamides F and G) to the 7-membered dioxepin ring (in paraherquamides A and E) represents a poorly understood but intriguing process that probably involves the 2-oxoglutarate-dependent dioxygenase phqC. Finally, the remaining members of the paraherquamide cluster, including phqI as well as phqM (or phqH), do not have a clearly prescribed role and appear to be redundant. This is Cytochrome P450 monooxygenase phqM from Penicillium fellutanum.